The chain runs to 184 residues: NADH-quinone oxidoreductase subunit B (184 aa).

4 residues coordinate [4Fe-4S] cluster: C37, C38, C103, and C132.

This sequence belongs to the complex I 20 kDa subunit family. In terms of assembly, NDH-1 is composed of 14 different subunits. Subunits NuoB, C, D, E, F, and G constitute the peripheral sector of the complex. Requires [4Fe-4S] cluster as cofactor.

The protein resides in the cell membrane. It catalyses the reaction a quinone + NADH + 5 H(+)(in) = a quinol + NAD(+) + 4 H(+)(out). In terms of biological role, NDH-1 shuttles electrons from NADH, via FMN and iron-sulfur (Fe-S) centers, to quinones in the respiratory chain. The immediate electron acceptor for the enzyme in this species is believed to be a menaquinone. Couples the redox reaction to proton translocation (for every two electrons transferred, four hydrogen ions are translocated across the cytoplasmic membrane), and thus conserves the redox energy in a proton gradient. The protein is NADH-quinone oxidoreductase subunit B of Nocardia farcinica (strain IFM 10152).